We begin with the raw amino-acid sequence, 559 residues long: Alpha-(1,6)-fucosyltransferase (559 aa).

At 1-4 (MLKC) the chain is on the cytoplasmic side. Residues 5 to 24 (IAAVGTVVWMTMFLFLYSQL) form a helical; Signal-anchor for type II membrane protein membrane-spanning segment. Over 25-559 (SNNQSGGDSI…RKFKFEALLD (535 aa)) the chain is Lumenal. The N-linked (GlcNAc...) asparagine glycan is linked to N27. Residues 63-74 (QERNDQHKKIME) are compositionally biased toward basic and acidic residues. Residues 63–90 (QERNDQHKKIMEQSHQLPPNPENPSLPK) are disordered. Residues 80–90 (PPNPENPSLPK) show a composition bias toward pro residues. An N-linked (GlcNAc...) asparagine glycan is attached at N134. 3 disulfides stabilise this stretch: C188/C251, C196/C214, and C202/C206. The region spanning 190–480 (EAKTLVCNLD…ADDGSKFHSL (291 aa)) is the GT23 domain. An important for donor substrate binding region spans residues 351-352 (RR). A disulfide bond links C452 and C459. The SH3 domain occupies 489–550 (QQAHEVIVIE…PSYKVVNDWR (62 aa)).

It belongs to the glycosyltransferase 23 family. Mn(2+) serves as cofactor. It depends on Mg(2+) as a cofactor.

The protein resides in the golgi apparatus. It localises to the golgi stack membrane. It carries out the reaction N(4)-{beta-D-GlcNAc-(1-&gt;2)-alpha-D-Man-(1-&gt;3)-[beta-D-GlcNAc-(1-&gt;2)-alpha-D-Man-(1-&gt;6)]-beta-D-Man-(1-&gt;4)-beta-D-GlcNAc-(1-&gt;4)-beta-D-GlcNAc}-L-asparaginyl-[protein] + GDP-beta-L-fucose = an N(4)-{beta-D-GlcNAc-(1-&gt;2)-alpha-D-Man-(1-&gt;3)-[beta-D-GlcNAc-(1-&gt;2)-alpha-D-Man-(1-&gt;6)]-beta-D-Man-(1-&gt;4)-beta-D-GlcNAc-(1-&gt;4)-[alpha-L-Fuc-(1-&gt;6)]-beta-D-GlcNAc}-L-asparaginyl-[protein] + GDP + H(+). Its pathway is protein modification; protein glycosylation. Its activity is regulated as follows. Inhibited by Fe(3+), Ni(2+) and Cu(2+). Its function is as follows. Catalyzes the addition of fucose in alpha 1-6 linkage to the first GlcNAc residue, next to the peptide chains in N-glycans. The addition is prevented if the GlcNAc residue is already fucosylated. Involved in susceptibility to the nematotoxic C.cinerea galectin Cgl2, likely by contributing to the synthesis of core alpha-1,6-fucosylated N-glycans to which Cgl2 binds. The sequence is that of Alpha-(1,6)-fucosyltransferase from Caenorhabditis elegans.